A 597-amino-acid chain; its full sequence is CTP synthase (597 aa).

An amidoligase domain region spans residues 1-272; sequence MARPKNVKYV…DMRVLKKLGL (272 aa). Ser-18 is a binding site for CTP. Ser-18 provides a ligand contact to UTP. 19–24 serves as a coordination point for ATP; sequence SLGKGI. Tyr-59 serves as a coordination point for L-glutamine. Position 76 (Asp-76) interacts with ATP. The Mg(2+) site is built by Asp-76 and Glu-146. CTP is bound by residues 153-155, 193-198, and Lys-229; these read DIE and KTKPTQ. Residues 193–198 and Lys-229 contribute to the UTP site; that span reads KTKPTQ. Residues 299-543 enclose the Glutamine amidotransferase type-1 domain; the sequence is NVAICGKYTE…VGAAKAYADG (245 aa). Gly-363 is an L-glutamine binding site. Cys-390 acts as the Nucleophile; for glutamine hydrolysis in catalysis. Residues 391–394, Glu-414, and Arg-471 each bind L-glutamine; that span reads LGMQ. Residues His-516 and Glu-518 contribute to the active site.

Belongs to the CTP synthase family. In terms of assembly, homotetramer.

The catalysed reaction is UTP + L-glutamine + ATP + H2O = CTP + L-glutamate + ADP + phosphate + 2 H(+). The enzyme catalyses L-glutamine + H2O = L-glutamate + NH4(+). It catalyses the reaction UTP + NH4(+) + ATP = CTP + ADP + phosphate + 2 H(+). It functions in the pathway pyrimidine metabolism; CTP biosynthesis via de novo pathway; CTP from UDP: step 2/2. Its activity is regulated as follows. Allosterically activated by GTP, when glutamine is the substrate; GTP has no effect on the reaction when ammonia is the substrate. The allosteric effector GTP functions by stabilizing the protein conformation that binds the tetrahedral intermediate(s) formed during glutamine hydrolysis. Inhibited by the product CTP, via allosteric rather than competitive inhibition. In terms of biological role, catalyzes the ATP-dependent amination of UTP to CTP with either L-glutamine or ammonia as the source of nitrogen. Regulates intracellular CTP levels through interactions with the four ribonucleotide triphosphates. The chain is CTP synthase from Chlorobium luteolum (strain DSM 273 / BCRC 81028 / 2530) (Pelodictyon luteolum).